A 206-amino-acid polypeptide reads, in one-letter code: Hypoxanthine-guanine phosphoribosyltransferase (206 aa).

GMP-binding positions include 110–118, Lys154, and 181–187; these read DEVDDTRTT and WIMYPWE. Asp114 serves as the catalytic Proton acceptor.

This sequence belongs to the purine/pyrimidine phosphoribosyltransferase family. Dimer. Mg(2+) is required as a cofactor.

It is found in the endoplasmic reticulum. The enzyme catalyses IMP + diphosphate = hypoxanthine + 5-phospho-alpha-D-ribose 1-diphosphate. The catalysed reaction is GMP + diphosphate = guanine + 5-phospho-alpha-D-ribose 1-diphosphate. Its function is as follows. Converts guanine to guanosine monophosphate, and hypoxanthine to inosine monophosphate. Transfers the 5-phosphoribosyl group from 5-phosphoribosylpyrophosphate onto the purine. Plays a central role in the generation of purine nucleotides through the purine salvage pathway. The polypeptide is Hypoxanthine-guanine phosphoribosyltransferase (hpt1) (Schizosaccharomyces pombe (strain 972 / ATCC 24843) (Fission yeast)).